A 394-amino-acid polypeptide reads, in one-letter code: MSQPQSSQVTKRGLTDPERAAIIAAAVPDHALDTQRKYHYFIQPRWKPLSEYEQLSCYAQPNPDWIAGGLDWGDWTQKFHGGRPSWGNESTELRTTDWYRHRDPARRWHHPYVKDKSEEARYTQRFLAAYSSEGSIRTIDPYWRDEILNKYFGALLYSEYGLFNAHSSVGRDCLSDTIRQTAVFAALDKVDNAQMIQMERLFIAKLVPGFDASTDVPKKIWTTDPIYSGARATVQEIWQGVQDWNEILWAGHAVMIATFGQFARREFFQRLATVYGDTLTPFFTAQSQTYFQTTRGAIDDLFVYCLANDSEFGAHNRTFLNAWTEHYLASSVAALKDFVGLYAKVEKSRADRSRRRLRGAAASSAIGRSITPDKIGFRVDVDQKVDAVLAGYKN.

M.trichosporium has two forms of methane monooxygenase, a soluble and a membrane-bound type. The soluble type consists of four components (A to D): protein A, comprising three chains, in an alpha-2, beta-2, gamma-2 configuration, is a nonheme iron protein containing an unusual mu-hydroxo bridge structure at its active site and interacts with both oxygen and methane.

The enzyme catalyses methane + NADH + O2 + H(+) = methanol + NAD(+) + H2O. It carries out the reaction methane + NADPH + O2 + H(+) = methanol + NADP(+) + H2O. In terms of biological role, responsible for the initial oxygenation of methane to methanol in methanotrophs. It also catalyzes the monohydroxylation of a variety of unactivated alkenes, alicyclic, aromatic and heterocyclic compounds. The polypeptide is Methane monooxygenase component A beta chain (mmoY) (Methylosinus trichosporium).